The sequence spans 762 residues: Molybdenum cofactor sulfurase 2 (762 aa).

Lysine 234 carries the N6-(pyridoxal phosphate)lysine modification. Cysteine 400 is a catalytic residue. The MOSC domain occupies 590-738; the sequence is AWISKALRMP…LECGSILEPV (149 aa).

Belongs to the class-V pyridoxal-phosphate-dependent aminotransferase family. MOCOS subfamily. The cofactor is pyridoxal 5'-phosphate.

The catalysed reaction is Mo-molybdopterin + L-cysteine + AH2 = thio-Mo-molybdopterin + L-alanine + A + H2O. Functionally, sulfurates the molybdenum cofactor. Sulfation of molybdenum is essential for xanthine dehydrogenase (XDH) and aldehyde oxidase (ADO) enzymes in which molybdenum cofactor is liganded by 1 oxygen and 1 sulfur atom in active form. In Aedes aegypti (Yellowfever mosquito), this protein is Molybdenum cofactor sulfurase 2.